Here is a 282-residue protein sequence, read N- to C-terminus: Pantothenate synthetase (282 aa).

30 to 37 (MGFLHDGH) serves as a coordination point for ATP. The active-site Proton donor is histidine 37. (R)-pantoate is bound at residue glutamine 60. Glutamine 60 is a beta-alanine binding site. ATP is bound at residue 146–149 (GQKD). Glutamine 152 contributes to the (R)-pantoate binding site. ATP contacts are provided by residues isoleucine 175 and 183-186 (KSSR).

The protein belongs to the pantothenate synthetase family. Homodimer.

It localises to the cytoplasm. The enzyme catalyses (R)-pantoate + beta-alanine + ATP = (R)-pantothenate + AMP + diphosphate + H(+). The protein operates within cofactor biosynthesis; (R)-pantothenate biosynthesis; (R)-pantothenate from (R)-pantoate and beta-alanine: step 1/1. Catalyzes the condensation of pantoate with beta-alanine in an ATP-dependent reaction via a pantoyl-adenylate intermediate. This is Pantothenate synthetase from Campylobacter jejuni subsp. jejuni serotype O:6 (strain 81116 / NCTC 11828).